Reading from the N-terminus, the 330-residue chain is Aspartate--ammonia ligase (330 aa).

Belongs to the class-II aminoacyl-tRNA synthetase family. AsnA subfamily.

It is found in the cytoplasm. The enzyme catalyses L-aspartate + NH4(+) + ATP = L-asparagine + AMP + diphosphate + H(+). Its pathway is amino-acid biosynthesis; L-asparagine biosynthesis; L-asparagine from L-aspartate (ammonia route): step 1/1. The protein is Aspartate--ammonia ligase of Salmonella agona (strain SL483).